The sequence spans 395 residues: Isoafricanol synthase (395 aa).

Mg(2+)-binding residues include D95, N246, S250, and E254. The segment covering 346–357 (TEAVSGGRERPW) has biased composition (basic and acidic residues). A disordered region spans residues 346–395 (TEAVSGGRERPWARLTGAEDLIRAGRGAPPPPGSGPDTRQPMPSEPSQLA).

Belongs to the terpene synthase family. The cofactor is Mg(2+).

The catalysed reaction is (2E,6E)-farnesyl diphosphate + H2O = (+)-isoafricanol + diphosphate. In terms of biological role, catalyzes the cyclization of farnesyl diphosphate (FPP) to isoafricanol. This chain is Isoafricanol synthase, found in Streptomyces malaysiensis.